A 261-amino-acid polypeptide reads, in one-letter code: Acetylglutamate kinase (261 aa).

Residues 41–42 (GG), arginine 63, and asparagine 157 each bind substrate.

The protein belongs to the acetylglutamate kinase family. ArgB subfamily.

It localises to the cytoplasm. It carries out the reaction N-acetyl-L-glutamate + ATP = N-acetyl-L-glutamyl 5-phosphate + ADP. Its pathway is amino-acid biosynthesis; L-arginine biosynthesis; N(2)-acetyl-L-ornithine from L-glutamate: step 2/4. In terms of biological role, catalyzes the ATP-dependent phosphorylation of N-acetyl-L-glutamate. The polypeptide is Acetylglutamate kinase (Koribacter versatilis (strain Ellin345)).